A 199-amino-acid chain; its full sequence is Holliday junction branch migration complex subunit RuvA (199 aa).

The segment at 1–62 is domain I; sequence MIAYIKGLLA…EDGIQFFGFA (62 aa). Residues 63 to 141 are domain II; it reads KEDEKECFLL…GMAAVEHSTL (79 aa). The interval 142–152 is flexible linker; the sequence is QQSVITTGSGD. The domain III stretch occupies residues 152–199; sequence DEAVEALLALGYSQGEARDAVKKAQKSAPEEDLSALIKIALKELAPSR.

It belongs to the RuvA family. In terms of assembly, homotetramer. Forms an RuvA(8)-RuvB(12)-Holliday junction (HJ) complex. HJ DNA is sandwiched between 2 RuvA tetramers; dsDNA enters through RuvA and exits via RuvB. An RuvB hexamer assembles on each DNA strand where it exits the tetramer. Each RuvB hexamer is contacted by two RuvA subunits (via domain III) on 2 adjacent RuvB subunits; this complex drives branch migration. In the full resolvosome a probable DNA-RuvA(4)-RuvB(12)-RuvC(2) complex forms which resolves the HJ.

The protein resides in the cytoplasm. In terms of biological role, the RuvA-RuvB-RuvC complex processes Holliday junction (HJ) DNA during genetic recombination and DNA repair, while the RuvA-RuvB complex plays an important role in the rescue of blocked DNA replication forks via replication fork reversal (RFR). RuvA specifically binds to HJ cruciform DNA, conferring on it an open structure. The RuvB hexamer acts as an ATP-dependent pump, pulling dsDNA into and through the RuvAB complex. HJ branch migration allows RuvC to scan DNA until it finds its consensus sequence, where it cleaves and resolves the cruciform DNA. The polypeptide is Holliday junction branch migration complex subunit RuvA (Desulforamulus reducens (strain ATCC BAA-1160 / DSM 100696 / MI-1) (Desulfotomaculum reducens)).